The chain runs to 205 residues: Holliday junction branch migration complex subunit RuvA (205 aa).

Positions 1–64 (MIGRLRGLLV…EDAQLLYGFI (64 aa)) are domain I. Positions 65–143 (TKQERALFRL…SLMEASAGSE (79 aa)) are domain II. The flexible linker stretch occupies residues 144–156 (REFMLKSNYTPAP). The domain III stretch occupies residues 157–205 (VINTAEEDAIAALLSLGYKPAQASKAVSAVYQDGMDSETLIKSSLKSML).

Belongs to the RuvA family. In terms of assembly, homotetramer. Forms an RuvA(8)-RuvB(12)-Holliday junction (HJ) complex. HJ DNA is sandwiched between 2 RuvA tetramers; dsDNA enters through RuvA and exits via RuvB. An RuvB hexamer assembles on each DNA strand where it exits the tetramer. Each RuvB hexamer is contacted by two RuvA subunits (via domain III) on 2 adjacent RuvB subunits; this complex drives branch migration. In the full resolvosome a probable DNA-RuvA(4)-RuvB(12)-RuvC(2) complex forms which resolves the HJ.

It is found in the cytoplasm. In terms of biological role, the RuvA-RuvB-RuvC complex processes Holliday junction (HJ) DNA during genetic recombination and DNA repair, while the RuvA-RuvB complex plays an important role in the rescue of blocked DNA replication forks via replication fork reversal (RFR). RuvA specifically binds to HJ cruciform DNA, conferring on it an open structure. The RuvB hexamer acts as an ATP-dependent pump, pulling dsDNA into and through the RuvAB complex. HJ branch migration allows RuvC to scan DNA until it finds its consensus sequence, where it cleaves and resolves the cruciform DNA. This is Holliday junction branch migration complex subunit RuvA from Shewanella sediminis (strain HAW-EB3).